Here is a 502-residue protein sequence, read N- to C-terminus: Cytochrome P450 monooxygenase AacuE (502 aa).

The chain crosses the membrane as a helical span at residues 4–26 (AITGLVATVTTFLAYIVFLSYTP). The N-linked (GlcNAc...) asparagine glycan is linked to N393. C439 is a binding site for heme.

This sequence belongs to the cytochrome P450 family. The cofactor is heme.

It is found in the membrane. The protein operates within secondary metabolite biosynthesis. Its function is as follows. Cytochrome P450 monooxygenase; part of the gene cluster that mediates the biosynthesis of the tetrahydroxanthone dimer secalonic acid D. The pathway begins with the synthesis of atrochrysone thioester by the polyketide synthase AacuL. The atrochrysone carboxyl ACP thioesterase AacuM then breaks the thioester bond and releases the atrochrysone carboxylic acid from AacuL. Atrochrysone carboxylic acid is decarboxylated by the decarboxylase AacuI, and oxidized by the anthrone oxygenase AacuG to yield emodin. Emodin is then reduced to emodin hydroquinone by a yet unidentified oxidoreductase. A-ring reduction by the short chain dehydrogenase AacuN, dehydration by the scytalone dehydratase-like protein AacuK and probable spontaneous re-oxidation, results in overall deoxygenation to chrysophanol. Baeyer-Villiger oxidation by the Baeyer-Villiger monooxygenase (BVMO) AacuH then yields monodictyphenone. Monodictyphenone is transformed into compounds with the tetrahydroxanthone skeleton via methylesterification by the methyltransferase AacuQ, followed by the action of the flavin-dependent monooxygenase AacuC, the isomerase AacuP, and the short chain dehydrogenase/reductase AacuF or AacuD. AacuF and AacuD should accept the same compound as a substrate but perform the ketoreduction with a different stereoselectivity, thus yielding blennolides B and A, respectively. In the final step of the biosynthesis, the cytochrome P450 monooxygenase AacuE accepts blennolide B and/or blennolide A to conduct the dimerization reaction to furnish the tetrahydroxanthone dimers, secalonic acids D, B, and F. This Aspergillus aculeatus (strain ATCC 16872 / CBS 172.66 / WB 5094) protein is Cytochrome P450 monooxygenase AacuE.